The sequence spans 71 residues: Gas vesicle protein A (71 aa).

An alpha helix 1 region spans residues 12 to 22; sequence LAEVIDRILDK. The segment at 26-34 is beta-strand 1; it reads VDAWVRVSL. The tract at residues 35–37 is beta turn; it reads VGI. The segment at 38–46 is beta-strand 2; that stretch reads ELLAIEARI. Positions 51–70 are alpha helix 2; sequence VETYLKYAEAVGLTQSAAVP.

It belongs to the gas vesicle GvpA family. In terms of assembly, the gas vesicle shell is 2 nm thick and consists of a single layer of this protein. It forms helical ribs nearly perpendicular to the long axis of the vesicle.

It localises to the gas vesicle shell. Functionally, gas vesicles are hollow, gas filled proteinaceous nanostructures found in some microorganisms. During planktonic growth they allow positioning of the organism at a favorable depth for light or nutrient acquisition. GvpA forms the protein shell. This chain is Gas vesicle protein A, found in Microchaete diplosiphon (Fremyella diplosiphon).